A 1099-amino-acid polypeptide reads, in one-letter code: Solute carrier family 38 member 10 (1099 aa).

10 consecutive transmembrane segments (helical) span residues 9-31, 36-58, 84-104, 123-143, 153-173, 229-249, 272-292, 323-343, 345-365, and 378-398; these read WGLV…PFCF, IVLG…MFLV, LVET…YVVI, TFRV…LSLQ, FSAM…LSSF, IFAS…FFGY, MIRV…ILPC, VLTL…PNVE, ILGF…PALI, and VVLW…LSVS. Disordered stretches follow at residues 440 to 679 and 720 to 1047; these read DSQE…EEAG and EIRQ…LAPK. S441 is subject to Phosphoserine. Basic and acidic residues-rich tracts occupy residues 441–454, 493–508, 517–528, 544–561, and 586–599; these read SQEK…KEVL, EAHR…KVVV, PEEKKPPPKLPD, ESEK…KRPE, and PRKE…RDLH. 2 positions are modified to phosphoserine: S607 and S635. Composition is skewed to basic and acidic residues over residues 653-663, 720-735, and 749-766; these read EAAEQREKNEA, EIRQ…KPKP, and GQEE…HAGE. Positions 698-734 form a coiled coil; sequence VQQKRLLDQQEKLLAVIEEQHKEIRQQRQEGEEDKPK. T767 carries the post-translational modification Phosphothreonine. Composition is skewed to basic and acidic residues over residues 793-802, 852-894, 917-928, 957-969, and 1010-1022; these read KGQHPLEEVK, EPVH…ETGK, EDSHSKSRHSEP, KSQD…RSEG, and QKPE…RDLK. The residue at position 886 (S886) is a Phosphoserine.

It belongs to the amino acid/polyamine transporter 2 family. As to expression, only expressed in the pituitary, adrenal gland, stomach and in the upper gastrointestinal tract.

It is found in the membrane. The catalysed reaction is L-glutamate(out) = L-glutamate(in). It catalyses the reaction L-glutamine(out) = L-glutamine(in). It carries out the reaction L-alanine(in) = L-alanine(out). The enzyme catalyses L-serine(in) = L-serine(out). The catalysed reaction is L-leucine(in) = L-leucine(out). Its function is as follows. Facilitates bidirectional transport of amino acids. May act as a glutamate sensor that regulates glutamate-glutamine cycle and mTOR signaling in the brain. The transport mechanism remains to be elucidated. The protein is Solute carrier family 38 member 10 of Rattus norvegicus (Rat).